The chain runs to 159 residues: NADH-quinone oxidoreductase subunit B (159 aa).

Residues Cys-37, Cys-38, Cys-102, and Cys-132 each contribute to the [4Fe-4S] cluster site.

Belongs to the complex I 20 kDa subunit family. In terms of assembly, NDH-1 is composed of 14 different subunits. Subunits NuoB, C, D, E, F, and G constitute the peripheral sector of the complex. The cofactor is [4Fe-4S] cluster.

Its subcellular location is the cell inner membrane. It catalyses the reaction a quinone + NADH + 5 H(+)(in) = a quinol + NAD(+) + 4 H(+)(out). Functionally, NDH-1 shuttles electrons from NADH, via FMN and iron-sulfur (Fe-S) centers, to quinones in the respiratory chain. Couples the redox reaction to proton translocation (for every two electrons transferred, four hydrogen ions are translocated across the cytoplasmic membrane), and thus conserves the redox energy in a proton gradient. In Ruthia magnifica subsp. Calyptogena magnifica, this protein is NADH-quinone oxidoreductase subunit B.